The chain runs to 109 residues: Large ribosomal subunit protein eL42 (109 aa).

The segment at 23 to 53 is disordered; that stretch reads VSQYKKSKESTHAQGRRRYDMKQSGFGGQTK. Positions 28–43 are enriched in basic and acidic residues; sequence KSKESTHAQGRRRYDM.

Belongs to the eukaryotic ribosomal protein eL42 family.

Its subcellular location is the cytoplasm. This Tetrahymena thermophila (strain SB210) protein is Large ribosomal subunit protein eL42 (RPL36A).